Reading from the N-terminus, the 360-residue chain is Peptide chain release factor 1 (360 aa).

The residue at position 235 (Gln235) is an N5-methylglutamine. Basic and acidic residues predominate over residues 285–295; the sequence is RQAAEQTDMRR. Positions 285–309 are disordered; sequence RQAAEQTDMRRNLLGSGDRSDKIRT.

It belongs to the prokaryotic/mitochondrial release factor family. Methylated by PrmC. Methylation increases the termination efficiency of RF1.

It localises to the cytoplasm. Peptide chain release factor 1 directs the termination of translation in response to the peptide chain termination codons UAG and UAA. The polypeptide is Peptide chain release factor 1 (prfA) (Haemophilus influenzae (strain ATCC 51907 / DSM 11121 / KW20 / Rd)).